Here is a 561-residue protein sequence, read N- to C-terminus: Potassium-transporting ATPase potassium-binding subunit (561 aa).

A run of 12 helical transmembrane segments spans residues 2–22 (GQGL…TPVL), 66–86 (IRAI…LIYF), 135–155 (ALGF…IAFI), 177–197 (ILLP…VPQT), 253–273 (LIET…YGVF), 280–300 (AWLL…VAAG), 327–347 (FGWA…CGAV), 354–374 (LMPQ…IWGG), 378–398 (GTAY…LMVG), 413–433 (IVLA…PSAI), 482–502 (LSTS…MLLL), and 531–551 (AGIV…LGPI).

It belongs to the KdpA family. As to quaternary structure, the system is composed of three essential subunits: KdpA, KdpB and KdpC.

The protein localises to the cell inner membrane. Part of the high-affinity ATP-driven potassium transport (or Kdp) system, which catalyzes the hydrolysis of ATP coupled with the electrogenic transport of potassium into the cytoplasm. This subunit binds the periplasmic potassium ions and delivers the ions to the membrane domain of KdpB through an intramembrane tunnel. This is Potassium-transporting ATPase potassium-binding subunit from Nostoc sp. (strain PCC 7120 / SAG 25.82 / UTEX 2576).